The following is a 687-amino-acid chain: SLCO1B3-SLCO1B7 readthrough transcript protein (687 aa).

The Cytoplasmic segment spans residues 1-29 (MDQHQHLNKTAESASSEKKKTRRCNGFKM). The chain crosses the membrane as a helical span at residues 30–50 (FLAALSFSYIAKALGGIIMKI). The Extracellular segment spans residues 51-63 (SITQIERRFDISS). The helical transmembrane segment at 64-84 (SLAGLIDGSFEIGNLLVIVFV) threads the bilayer. The Cytoplasmic segment spans residues 85–96 (SYFGSKLHRPKL). The chain crosses the membrane as a helical span at residues 97–117 (IGIGCLLMGTGSILTSLPHFF). The Extracellular portion of the chain corresponds to 118–170 (MGYYRYSKETNIDPSENSTSNLPNCLINQMLSLNRTPSEIIERGCVKESGSHM). Residues Asn-134 and Asn-151 are each glycosylated (N-linked (GlcNAc...) asparagine). The chain crosses the membrane as a helical span at residues 171–191 (WIYVFMGNMLRGIGETPIVPL). Topologically, residues 192 to 206 (GISYIDDFAKEGHSS) are cytoplasmic. Residues 207–227 (LYLGTVNVMGMTGLVFAFMLG) traverse the membrane as a helical segment. At 228–258 (SLFAKMYVDIGYVDLSTIRITPKDSRWVGAW) the chain is on the extracellular side. Residues 259 to 279 (WLGFLVSGIVSIISSIPFFFL) traverse the membrane as a helical segment. The Cytoplasmic segment spans residues 280–339 (PLNPNKPQKERKVSLFLHVLKTNDKRNQIANLTNRRKYITKNVTGFFQSLKSILTNPLYV). Residues 340 to 360 (IFVIFTLLHMSSYIASLTYII) form a helical membrane-spanning segment. The Extracellular segment spans residues 361–376 (KMVEQQYGWSASKTNF). A helical transmembrane segment spans residues 377 to 397 (LLGVLALPAVAIGMFSGGYII). Residues 398–409 (KKFKLSLVGLAK) lie on the Cytoplasmic side of the membrane. A helical transmembrane segment spans residues 410 to 430 (LAFCSATVHLLSQVLYFFLIC). Topologically, residues 431-539 (ESKSVAGLTL…CTRKSYVYFV (109 aa)) are extracellular. The Kazal-like domain occupies 453–508 (DVPLSYCNSECNCDESQWEPVCGNNGITYLSPCLAGCKSSSGNKEPIVFYNCSCVE). 3 disulfide bridges follow: Cys-459–Cys-489, Cys-465–Cys-485, and Cys-474–Cys-506. Asn-503 and Asn-516 each carry an N-linked (GlcNAc...) asparagine glycan. The chain crosses the membrane as a helical span at residues 540-560 (IQVLDAFLCAVGLTSYSVLVI). The Cytoplasmic portion of the chain corresponds to 561–568 (RIVQPELK). The helical transmembrane segment at 569–589 (ALAIGFHSMIMRSLGGILVPI) threads the bilayer. Residues 590 to 624 (YFGALIDTTCMKWSTNSCGARGACRIYNSTYLGRA) are Extracellular-facing. N-linked (GlcNAc...) asparagine glycosylation occurs at Asn-617. The chain crosses the membrane as a helical span at residues 625 to 645 (FFGLKVALIFPVLVLLTVFIF). Residues 646 to 687 (VVRKKSHGKDTKVLENERQVMDEANLEFLNDSEHFVPSAEEQ) lie on the Cytoplasmic side of the membrane.

This sequence belongs to the organo anion transporter (TC 2.A.60) family. In terms of tissue distribution, expressed in the perivenular areas (centrilobular) of the liver (at protein level).

The protein resides in the smooth endoplasmic reticulum membrane. Its subcellular location is the cell membrane. It localises to the endoplasmic reticulum membrane. It catalyses the reaction 17beta-estradiol 17-O-(beta-D-glucuronate)(out) = 17beta-estradiol 17-O-(beta-D-glucuronate)(in). It carries out the reaction dehydroepiandrosterone 3-sulfate(out) = dehydroepiandrosterone 3-sulfate(in). The catalysed reaction is taurocholate(out) = taurocholate(in). The enzyme catalyses lithocholate(out) = lithocholate(in). Transport activity is induced by farnesoid X receptor (FXR) agonists such as chenodeoxycholate. Mediates the Na(+)-independent uptake of organic anions. Transports the conjugated steroids 17-beta-glucuronosyl estradiol (17beta-estradiol 17-O-(beta-D-glucuronate) or E2G) and dehydroepiandrosterone 3-sulfate (DHEAS) at the smooth endoplasmic reticulum membrane (SER), granting access to metabolizing enzymes. Contributes to the metabolism of bile acids such as taurocholate (cholyltaurine) and lithocholate, by functioning as a doorway between SER and cytosol, thereby decreasing their circulating levels and protecting the organism from their detergent properties. Regulates access or exit of drugs to the SER lumen. In Homo sapiens (Human), this protein is SLCO1B3-SLCO1B7 readthrough transcript protein.